The primary structure comprises 260 residues: Exosome complex component Rrp4 (260 aa).

The 70-residue stretch at 59–128 folds into the S1 motif domain; it reads NDVVIGVVIV…SSMKIELALR (70 aa). In terms of domain architecture, KH spans 136 to 194; it reads RTGQIVEVEPVKVPRVIGHGGSMISMLKKETNCSIFVGQNGRIWIDGKDEDIELLSKAL.

The protein belongs to the RRP4 family. In terms of assembly, component of the archaeal exosome complex. Forms a trimer of Rrp4 and/or Csl4 subunits. The trimer associates with a hexameric ring-like arrangement composed of 3 Rrp41-Rrp42 heterodimers.

It localises to the cytoplasm. Functionally, non-catalytic component of the exosome, which is a complex involved in RNA degradation. Increases the RNA binding and the efficiency of RNA degradation. Confers strong poly(A) specificity to the exosome. In Methanosarcina mazei (strain ATCC BAA-159 / DSM 3647 / Goe1 / Go1 / JCM 11833 / OCM 88) (Methanosarcina frisia), this protein is Exosome complex component Rrp4.